We begin with the raw amino-acid sequence, 266 residues long: Receptor-recognizing protein gp38 (266 aa).

10 short sequence motifs (GRM) span residues 116-123 (GRGGNGGY), 126-137 (SGGDGNGTQGGH), 157-171 (AGGG…RPHS), 174-184 (KWQDIGGGGGR), 187-191 (GGAGG), 194-200 (YSGGAAS), 202-209 (EGPGGGYD), 214-220 (HSGAGGN), 223-228 (AAGQNA), and 232-246 (GGKV…ASGH).

It belongs to the receptor-recognizing protein gp38 family.

The protein resides in the virion. Functionally, receptor binding protein (RBP) that is at the tip of the long tail fibers and serves as the phage recognition site for the attachment host receptor. Probably uses the host receptor OmpA. The protein is Receptor-recognizing protein gp38 (38) of Enterobacteria phage Ox2 (Bacteriophage Ox2).